The sequence spans 662 residues: Biosynthetic arginine decarboxylase (662 aa).

Lys-126 carries the N6-(pyridoxal phosphate)lysine modification. Residue 308–318 participates in substrate binding; that stretch reads LNVGGGLGVDY.

Belongs to the Orn/Lys/Arg decarboxylase class-II family. SpeA subfamily. Mg(2+) is required as a cofactor. It depends on pyridoxal 5'-phosphate as a cofactor.

It catalyses the reaction L-arginine + H(+) = agmatine + CO2. Catalyzes the biosynthesis of agmatine from arginine. The protein is Biosynthetic arginine decarboxylase of Deinococcus radiodurans (strain ATCC 13939 / DSM 20539 / JCM 16871 / CCUG 27074 / LMG 4051 / NBRC 15346 / NCIMB 9279 / VKM B-1422 / R1).